The sequence spans 244 residues: Mitophagy receptor atg43 (244 aa).

The interval 1–24 (MSSESKGIPIPRSDSNKTSDVSSW) is disordered. Topologically, residues 1–198 (MSSESKGIPI…LVALITLRDH (198 aa)) are cytoplasmic. An atg8 interacting motif (AIM) motif is present at residues 28 to 31 (YELI). The segment at 105–131 (SLSLLQSKEEDDSSNWETEDSESAVEE) is disordered. The span at 113-131 (EEDDSSNWETEDSESAVEE) shows a compositional bias: acidic residues. Residues 165–184 (PPIPDLRFQQSYLQSIQRAN) form an involved in MIM complex binding. Required for normal vegetative cell population growth but is dispensable for mitophagy region. A helical membrane pass occupies residues 199-215 (VLYPFLSGGMWVFVRHI). Residues 216 to 244 (FQFLKLQEKGFHFGQSLRRNLGLFSTFKD) lie on the Mitochondrial intermembrane side of the membrane.

Interacts (via N-terminal atg8 interacting motif) with atg8; the interaction is direct. Interacts with the mitochondrial outer import machinery (MIM) complex subunits mim1 and mim2.

Its subcellular location is the mitochondrion outer membrane. In terms of biological role, mitophagy receptor that tethers atg8 to the mitochondrial outer membrane to promote selective autophagy. The protein is Mitophagy receptor atg43 of Schizosaccharomyces pombe (strain 972 / ATCC 24843) (Fission yeast).